The primary structure comprises 394 residues: Elongation factor Tu (394 aa).

One can recognise a tr-type G domain in the interval 10–204 (KPHVNVGTIG…ALDSYIPTPE (195 aa)). A G1 region spans residues 19–26 (GHVDHGKT). Residue 19 to 26 (GHVDHGKT) coordinates GTP. Thr-26 provides a ligand contact to Mg(2+). The G2 stretch occupies residues 60–64 (GITIN). The segment at 81–84 (DCPG) is G3. GTP is bound by residues 81-85 (DCPGH) and 136-139 (NKCD). Residues 136–139 (NKCD) are G4. The segment at 174–176 (SAL) is G5.

Belongs to the TRAFAC class translation factor GTPase superfamily. Classic translation factor GTPase family. EF-Tu/EF-1A subfamily. In terms of assembly, monomer.

It localises to the cytoplasm. It carries out the reaction GTP + H2O = GDP + phosphate + H(+). GTP hydrolase that promotes the GTP-dependent binding of aminoacyl-tRNA to the A-site of ribosomes during protein biosynthesis. This chain is Elongation factor Tu, found in Neisseria meningitidis serogroup A / serotype 4A (strain DSM 15465 / Z2491).